Here is a 101-residue protein sequence, read N- to C-terminus: 2-amino-4-ketopentanoate thiolase alpha subunit (101 aa).

This sequence belongs to the OrtA family. Heterodimer with OrtB.

It catalyses the reaction D-alanine + acetyl-CoA = (2R)-2-amino-4-oxopentanoate + CoA. Completely inhibited by p-chloromercuribenzoate (p-ClHgBzO) and acetyl-CoA, and partially inhibited by N-ethylmaleimide. In terms of biological role, involved in the ornithine fermentation pathway. Catalyzes the thiolytic cleavage of 2-amino-4-ketopentanoate (AKP) with coenzyme A (CoA) to form acetyl-CoA and alanine. It is strictly specific for AKP. The polypeptide is 2-amino-4-ketopentanoate thiolase alpha subunit (Acetoanaerobium sticklandii (strain ATCC 12662 / DSM 519 / JCM 1433 / CCUG 9281 / NCIMB 10654 / HF) (Clostridium sticklandii)).